The chain runs to 349 residues: Nuclear distribution protein nudE homolog 1-A (349 aa).

Residues 22–189 (VAMKYKQCSE…ELAVQQKQEK (168 aa)) are a coiled coil.

It belongs to the nudE family. In terms of assembly, self-associates. Interacts with pafah1b1. In terms of processing, phosphorylated in mitosis.

It localises to the cytoplasm. The protein resides in the cytoskeleton. Its subcellular location is the microtubule organizing center. The protein localises to the centrosome. It is found in the spindle. It localises to the chromosome. The protein resides in the centromere. Its subcellular location is the kinetochore. The protein localises to the cleavage furrow. It is found in the cytoplasmic vesicle membrane. Required for centrosome duplication and formation and function of the mitotic spindle. This is Nuclear distribution protein nudE homolog 1-A (nde1-a) from Xenopus laevis (African clawed frog).